Consider the following 251-residue polypeptide: PF03932 family protein CutC (251 aa).

This sequence belongs to the CutC family.

It is found in the cytoplasm. The polypeptide is PF03932 family protein CutC (Bacteroides fragilis (strain ATCC 25285 / DSM 2151 / CCUG 4856 / JCM 11019 / LMG 10263 / NCTC 9343 / Onslow / VPI 2553 / EN-2)).